The chain runs to 111 residues: WAP four-disulfide core domain protein 12 (111 aa).

Residues 1–23 form the signal peptide; that stretch reads MGSSSFLVLMVSLALVTLVAAEG. The 48-residue stretch at 27 to 74 folds into the WAP domain; that stretch reads NIEKPGVCPADNIRCIKSDPPQCHTDQDCQGIRKCCYLHCGFKCVIPV. Cystine bridges form between cysteine 34–cysteine 62, cysteine 41–cysteine 66, cysteine 49–cysteine 61, and cysteine 55–cysteine 70. Residues 80-111 form a disordered region; the sequence is GGNKDEDVSRPCPEPGWEAKPPGVFSTRCPQK.

The protein resides in the secreted. Its function is as follows. Antibacterial protein. Putative acid-stable proteinase inhibitor. In Callithrix jacchus (White-tufted-ear marmoset), this protein is WAP four-disulfide core domain protein 12 (WFDC12).